The sequence spans 494 residues: Glycerol kinase (494 aa).

An ADP-binding site is contributed by threonine 13. 3 residues coordinate ATP: threonine 13, threonine 14, and serine 15. A sn-glycerol 3-phosphate-binding site is contributed by threonine 13. Arginine 17 is a binding site for ADP. Sn-glycerol 3-phosphate contacts are provided by arginine 83, glutamate 84, tyrosine 135, and aspartate 244. Residues arginine 83, glutamate 84, tyrosine 135, aspartate 244, and glutamine 245 each coordinate glycerol. ADP contacts are provided by threonine 266 and glycine 309. ATP is bound by residues threonine 266, glycine 309, glutamine 313, and glycine 410. 2 residues coordinate ADP: glycine 410 and asparagine 414.

It belongs to the FGGY kinase family.

It carries out the reaction glycerol + ATP = sn-glycerol 3-phosphate + ADP + H(+). The protein operates within polyol metabolism; glycerol degradation via glycerol kinase pathway; sn-glycerol 3-phosphate from glycerol: step 1/1. Inhibited by fructose 1,6-bisphosphate (FBP). Key enzyme in the regulation of glycerol uptake and metabolism. Catalyzes the phosphorylation of glycerol to yield sn-glycerol 3-phosphate. This chain is Glycerol kinase, found in Shewanella baltica (strain OS223).